Here is a 57-residue protein sequence, read N- to C-terminus: DNA gyrase inhibitor YacG (57 aa).

Positions 5, 8, 20, and 24 each coordinate Zn(2+).

This sequence belongs to the DNA gyrase inhibitor YacG family. In terms of assembly, interacts with GyrB. It depends on Zn(2+) as a cofactor.

Inhibits all the catalytic activities of DNA gyrase by preventing its interaction with DNA. Acts by binding directly to the C-terminal domain of GyrB, which probably disrupts DNA binding by the gyrase. This Caulobacter vibrioides (strain ATCC 19089 / CIP 103742 / CB 15) (Caulobacter crescentus) protein is DNA gyrase inhibitor YacG.